Reading from the N-terminus, the 660-residue chain is Bifunctional polymyxin resistance protein ArnA (660 aa).

The interval 1-304 (MKTVVFAYHD…TLGLVQGSRL (304 aa)) is formyltransferase ArnAFT. 86 to 88 (HLI) contributes to the (6R)-10-formyltetrahydrofolate binding site. Catalysis depends on histidine 104, which acts as the Proton donor; for formyltransferase activity. Residues arginine 114 and 136 to 140 (VKRAD) each bind (6R)-10-formyltetrahydrofolate. The interval 314–660 (RRTRVLILGV…RTVDLTDKPS (347 aa)) is dehydrogenase ArnADH. NAD(+) contacts are provided by residues aspartate 347 and 368-369 (DI). UDP-alpha-D-glucuronate-binding positions include alanine 393, tyrosine 398, and 432-433 (TS). Residue glutamate 434 is the Proton acceptor; for decarboxylase activity of the active site. Residues arginine 460, asparagine 492, 526 to 535 (KLIDGGKQKR), and tyrosine 613 each bind UDP-alpha-D-glucuronate. Arginine 619 acts as the Proton donor; for decarboxylase activity in catalysis.

This sequence in the N-terminal section; belongs to the Fmt family. UDP-L-Ara4N formyltransferase subfamily. The protein in the C-terminal section; belongs to the NAD(P)-dependent epimerase/dehydratase family. UDP-glucuronic acid decarboxylase subfamily. In terms of assembly, homohexamer, formed by a dimer of trimers.

It carries out the reaction UDP-alpha-D-glucuronate + NAD(+) = UDP-beta-L-threo-pentopyranos-4-ulose + CO2 + NADH. The catalysed reaction is UDP-4-amino-4-deoxy-beta-L-arabinose + (6R)-10-formyltetrahydrofolate = UDP-4-deoxy-4-formamido-beta-L-arabinose + (6S)-5,6,7,8-tetrahydrofolate + H(+). It functions in the pathway nucleotide-sugar biosynthesis; UDP-4-deoxy-4-formamido-beta-L-arabinose biosynthesis; UDP-4-deoxy-4-formamido-beta-L-arabinose from UDP-alpha-D-glucuronate: step 1/3. Its pathway is nucleotide-sugar biosynthesis; UDP-4-deoxy-4-formamido-beta-L-arabinose biosynthesis; UDP-4-deoxy-4-formamido-beta-L-arabinose from UDP-alpha-D-glucuronate: step 3/3. The protein operates within bacterial outer membrane biogenesis; lipopolysaccharide biosynthesis. Its function is as follows. Bifunctional enzyme that catalyzes the oxidative decarboxylation of UDP-glucuronic acid (UDP-GlcUA) to UDP-4-keto-arabinose (UDP-Ara4O) and the addition of a formyl group to UDP-4-amino-4-deoxy-L-arabinose (UDP-L-Ara4N) to form UDP-L-4-formamido-arabinose (UDP-L-Ara4FN). The modified arabinose is attached to lipid A and is required for resistance to polymyxin and cationic antimicrobial peptides. The polypeptide is Bifunctional polymyxin resistance protein ArnA (Escherichia coli O9:H4 (strain HS)).